Reading from the N-terminus, the 165-residue chain is Cathelicidin-7 (165 aa).

The N-terminal stretch at 1–29 (METQRASFSLGRSSLWLLLLGLVVPSASA) is a signal peptide. Residues 30–130 (QDLSYREAVL…FDITCNNIQS (101 aa)) constitute a propeptide that is removed on maturation. 2 cysteine pairs are disulfide-bonded: Cys86–Cys97 and Cys108–Cys125. The residue at position 164 (Arg164) is an Arginine amide.

The protein belongs to the cathelicidin family. As to expression, expressed in bone marrow myeloid cells, spleen and testis.

Its subcellular location is the secreted. Its function is as follows. Exerts a potent antimicrobial activity. The protein is Cathelicidin-7 (CATHL7) of Bos taurus (Bovine).